The sequence spans 619 residues: UPF0329 protein ECU01_0100/ECU01_1510/ECU08_0030 (619 aa).

The span at 350 to 384 (REEREKREKREKREESKGRGKRGAGEAKEESKEED) shows a compositional bias: basic and acidic residues. The tract at residues 350-428 (REEREKREKR…GKRKGDGHHY (79 aa)) is disordered. Positions 385-399 (GKEEEGVEAEEEESA) are enriched in acidic residues. Residues 411–428 (ARRKKSLKGKRKGDGHHY) are compositionally biased toward basic residues.

It belongs to the UPF0329 family.

In Encephalitozoon cuniculi (strain GB-M1) (Microsporidian parasite), this protein is UPF0329 protein ECU01_0100/ECU01_1510/ECU08_0030.